A 232-amino-acid chain; its full sequence is Flagellar L-ring protein (232 aa).

The signal sequence occupies residues 1 to 21 (MQKNAAHTYAISSLLVLSLTG). A lipid anchor (N-palmitoyl cysteine) is attached at Cys-22. Cys-22 is lipidated: S-diacylglycerol cysteine.

It belongs to the FlgH family. As to quaternary structure, the basal body constitutes a major portion of the flagellar organelle and consists of four rings (L,P,S, and M) mounted on a central rod.

It is found in the cell outer membrane. The protein localises to the bacterial flagellum basal body. In terms of biological role, assembles around the rod to form the L-ring and probably protects the motor/basal body from shearing forces during rotation. The sequence is that of Flagellar L-ring protein from Escherichia coli O7:K1 (strain IAI39 / ExPEC).